The following is a 1873-amino-acid chain: Kinesin-related protein 8 (1873 aa).

In terms of domain architecture, Kinesin motor spans 13-413 (CVRVALRVRP…LKYAYRARNI (401 aa)). 93 to 100 (GQTGSGKT) serves as a coordination point for ATP. Disordered stretches follow at residues 231 to 302 (NSPV…DERN), 463 to 567 (VSIP…SPTS), 778 to 797 (LDKD…YYED), 841 to 891 (KIDS…ARKT), 930 to 1008 (KQRV…TEQL), 1179 to 1207 (PQPL…QRSS), 1244 to 1267 (LPSQ…STSS), 1328 to 1360 (TTTT…NNSS), and 1403 to 1467 (NNIT…PRPD). The span at 232-247 (SPVTSSSTSSTSTSSS) shows a compositional bias: low complexity. Residues 280–297 (IDEDEEDDEEDEDDDIMS) show a composition bias toward acidic residues. Over residues 473–567 (TPTLTNNNNN…NNTATPSPTS (95 aa)) the composition is skewed to low complexity. The stretch at 715-933 (FENDSEELSD…KEIEVHKQRV (219 aa)) forms a coiled coil. 5 stretches are compositionally biased toward low complexity: residues 937–1005 (INSK…TPTT), 1182–1200 (LQSQ…NSEQ), 1244–1254 (LPSQQQLSSSQ), 1348–1358 (NNTNNNNNNNN), and 1423–1454 (SLQS…SNNN). WD repeat units lie at residues 1506 to 1546 (GHDG…NMLD), 1548 to 1587 (SSPG…NTNL), 1589 to 1628 (IFKT…KPLK), 1636 to 1673 (HHTG…LAQK), and 1677 to 1714 (PHHD…NLIN). Residues 1758 to 1780 (NNNNNNSSNNNKSSSAPSSTTSS) form a disordered region. WD repeat units follow at residues 1805–1842 (AHND…NSLL) and 1844–1873 (GHES…IWKC).

The protein belongs to the TRAFAC class myosin-kinesin ATPase superfamily. Kinesin family.

Its subcellular location is the cytoplasm. The protein resides in the cytoskeleton. In terms of biological role, microtubule-associated force-producing protein that plays a role in organelle transport. Its motor activity is directed toward the microtubule's plus end. Cooperates with kif10 and dynein to organize interphase microtubules. In Dictyostelium discoideum (Social amoeba), this protein is Kinesin-related protein 8 (kif8).